The sequence spans 365 residues: tRNA/tmRNA (uracil-C(5))-methyltransferase (365 aa).

S-adenosyl-L-methionine contacts are provided by Q196, Y224, N229, E245, and D298. C323 (nucleophile) is an active-site residue. The active-site Proton acceptor is the E357.

This sequence belongs to the class I-like SAM-binding methyltransferase superfamily. RNA M5U methyltransferase family. TrmA subfamily.

The enzyme catalyses uridine(54) in tRNA + S-adenosyl-L-methionine = 5-methyluridine(54) in tRNA + S-adenosyl-L-homocysteine + H(+). The catalysed reaction is uridine(341) in tmRNA + S-adenosyl-L-methionine = 5-methyluridine(341) in tmRNA + S-adenosyl-L-homocysteine + H(+). Functionally, dual-specificity methyltransferase that catalyzes the formation of 5-methyluridine at position 54 (m5U54) in all tRNAs, and that of position 341 (m5U341) in tmRNA (transfer-mRNA). The polypeptide is tRNA/tmRNA (uracil-C(5))-methyltransferase (Nautilia profundicola (strain ATCC BAA-1463 / DSM 18972 / AmH)).